Reading from the N-terminus, the 459-residue chain is Chromosomal replication initiator protein DnaA (459 aa).

A domain I, interacts with DnaA modulators region spans residues 1–83 (MKNAREIWRN…NKLEIHFIEE (83 aa)). Residues 83 to 121 (ESQAHKYAPADGSSNESIAVTETKEQPVLLPSKEEGDLG) form a domain II region. The tract at residues 122 to 338 (QLNDKYIFET…GALTRVVAYA (217 aa)) is domain III, AAA+ region. The ATP site is built by glycine 166, glycine 168, lysine 169, and threonine 170. Positions 339 to 459 (KLVGRPIDPD…IQTLKKALSN (121 aa)) are domain IV, binds dsDNA.

The protein belongs to the DnaA family. In terms of assembly, oligomerizes as a right-handed, spiral filament on DNA at oriC.

The protein resides in the cytoplasm. Its function is as follows. Plays an essential role in the initiation and regulation of chromosomal replication. ATP-DnaA binds to the origin of replication (oriC) to initiate formation of the DNA replication initiation complex once per cell cycle. Binds the DnaA box (a 9 base pair repeat at the origin) and separates the double-stranded (ds)DNA. Forms a right-handed helical filament on oriC DNA; dsDNA binds to the exterior of the filament while single-stranded (ss)DNA is stabiized in the filament's interior. The ATP-DnaA-oriC complex binds and stabilizes one strand of the AT-rich DNA unwinding element (DUE), permitting loading of DNA polymerase. After initiation quickly degrades to an ADP-DnaA complex that is not apt for DNA replication. Binds acidic phospholipids. The protein is Chromosomal replication initiator protein DnaA of Exiguobacterium sp. (strain ATCC BAA-1283 / AT1b).